Consider the following 158-residue polypeptide: UPF0758 protein VC_1786 (158 aa).

An MPN domain is found at 37 to 158 (TFARTENTTE…SVSFAERGWL (122 aa)). Zn(2+) is bound by residues His108, His110, and Asp121. Positions 108-121 (HNHPSGDPEPSQAD) match the JAMM motif motif.

Belongs to the UPF0758 family.

This is UPF0758 protein VC_1786 from Vibrio cholerae serotype O1 (strain ATCC 39315 / El Tor Inaba N16961).